Here is a 76-residue protein sequence, read N- to C-terminus: Large ribosomal subunit protein uL24 (76 aa).

This sequence belongs to the universal ribosomal protein uL24 family. As to quaternary structure, part of the 50S ribosomal subunit.

One of two assembly initiator proteins, it binds directly to the 5'-end of the 23S rRNA, where it nucleates assembly of the 50S subunit. In terms of biological role, one of the proteins that surrounds the polypeptide exit tunnel on the outside of the subunit. The polypeptide is Large ribosomal subunit protein uL24 (Campylobacter hominis (strain ATCC BAA-381 / DSM 21671 / CCUG 45161 / LMG 19568 / NCTC 13146 / CH001A)).